Consider the following 123-residue polypeptide: Putative C-type lectin protein FPV003/FPV258 (123 aa).

Positions 21–122 (CRGPYTSYNN…CNATYGFVCI (102 aa)) constitute a C-type lectin domain.

This chain is Putative C-type lectin protein FPV003/FPV258, found in Fowlpox virus (strain NVSL) (FPV).